Here is a 456-residue protein sequence, read N- to C-terminus: L-2-hydroxyglutarate dehydrogenase, mitochondrial (456 aa).

The N-terminal 20 residues, 1–20 (MLKTSFLLSKRNAVSLSRVL), are a transit peptide targeting the mitochondrion.

This sequence belongs to the L2HGDH family. The cofactor is FAD.

Its subcellular location is the mitochondrion. It catalyses the reaction (S)-2-hydroxyglutarate + A = 2-oxoglutarate + AH2. This Nematostella vectensis (Starlet sea anemone) protein is L-2-hydroxyglutarate dehydrogenase, mitochondrial.